We begin with the raw amino-acid sequence, 475 residues long: MSPQTETKAGVGFKAGVKDYRLTYYTPDYETKETDILAAFRMTPQAGVPPEEAGAAVAAESSTGTWTTVWTDGLTSLDRYKGRCYDIEPVPGEENQYIVYVAYPLDLFEEGSVTNLFTSIVGNVFGFKALRALRLEDLRIPPAYSKTFQGPPHGIQVERDKINKYGRPLLGCTIKPKLGLSAKNYGRAVYEVLRGGLDFTKDDENVTSQPFMRWRDRFLFCAEAIYKAQAETGEIKGHYLNATAGTCEEMLKRAEYAKELGVPIVMHDYLTGGFTANTSLAHYCRDNGLLLHIHRAMHAVIDRQKNHGIHFRVLAKALRMSGGDHIHSGTVVGKLEGEREVTLGFVDLLRDDYIEKDRSRGIYFTQDWVSMPGVLPVASGGIHVWHMPALTEIFGDDSVLQFGGGTLGHPWGNAPGAVANRVALEACVQARNEGRDLAREGNDVIREATKWSPELAAACEVWKEIKFEFDTIDTL.

The propeptide occupies Met-1 to Ser-2. Pro-3 is subject to N-acetylproline. The residue at position 14 (Lys-14) is an N6,N6,N6-trimethyllysine. Residues Asn-123 and Thr-173 each contribute to the substrate site. The Proton acceptor role is filled by Lys-175. Position 177 (Lys-177) interacts with substrate. Positions 201, 203, and 204 each coordinate Mg(2+). An N6-carboxylysine modification is found at Lys-201. His-294 serves as the catalytic Proton acceptor. Residues Arg-295, His-327, and Ser-379 each coordinate substrate.

The protein belongs to the RuBisCO large chain family. Type I subfamily. In terms of assembly, heterohexadecamer of 8 large chains and 8 small chains; disulfide-linked. The disulfide link is formed within the large subunit homodimers. It depends on Mg(2+) as a cofactor. The disulfide bond which can form in the large chain dimeric partners within the hexadecamer appears to be associated with oxidative stress and protein turnover.

It is found in the plastid. The protein localises to the chloroplast. It catalyses the reaction 2 (2R)-3-phosphoglycerate + 2 H(+) = D-ribulose 1,5-bisphosphate + CO2 + H2O. The catalysed reaction is D-ribulose 1,5-bisphosphate + O2 = 2-phosphoglycolate + (2R)-3-phosphoglycerate + 2 H(+). In terms of biological role, ruBisCO catalyzes two reactions: the carboxylation of D-ribulose 1,5-bisphosphate, the primary event in carbon dioxide fixation, as well as the oxidative fragmentation of the pentose substrate in the photorespiration process. Both reactions occur simultaneously and in competition at the same active site. In Zygnema circumcarinatum (Green alga), this protein is Ribulose bisphosphate carboxylase large chain.